The primary structure comprises 127 residues: Aspartate 1-decarboxylase (127 aa).

Catalysis depends on Ser-25, which acts as the Schiff-base intermediate with substrate; via pyruvic acid. Ser-25 carries the pyruvic acid (Ser) modification. Thr-57 serves as a coordination point for substrate. Tyr-58 serves as the catalytic Proton donor. 73–75 contacts substrate; that stretch reads GAA.

It belongs to the PanD family. Heterooctamer of four alpha and four beta subunits. Pyruvate serves as cofactor. Post-translationally, is synthesized initially as an inactive proenzyme, which is activated by self-cleavage at a specific serine bond to produce a beta-subunit with a hydroxyl group at its C-terminus and an alpha-subunit with a pyruvoyl group at its N-terminus.

The protein localises to the cytoplasm. It catalyses the reaction L-aspartate + H(+) = beta-alanine + CO2. It functions in the pathway cofactor biosynthesis; (R)-pantothenate biosynthesis; beta-alanine from L-aspartate: step 1/1. Its function is as follows. Catalyzes the pyruvoyl-dependent decarboxylation of aspartate to produce beta-alanine. In Neisseria gonorrhoeae (strain ATCC 700825 / FA 1090), this protein is Aspartate 1-decarboxylase.